The chain runs to 397 residues: Acetate kinase (397 aa).

Asparagine 7 contributes to the Mg(2+) binding site. ATP is bound at residue lysine 14. Arginine 90 is a binding site for substrate. The active-site Proton donor/acceptor is the aspartate 147. ATP-binding positions include 207 to 211 (HLGNG), 282 to 284 (DFR), and 330 to 334 (GLGEN). A Mg(2+)-binding site is contributed by glutamate 383.

The protein belongs to the acetokinase family. In terms of assembly, homodimer. The cofactor is Mg(2+). Requires Mn(2+) as cofactor.

It is found in the cytoplasm. It catalyses the reaction acetate + ATP = acetyl phosphate + ADP. It functions in the pathway metabolic intermediate biosynthesis; acetyl-CoA biosynthesis; acetyl-CoA from acetate: step 1/2. Catalyzes the formation of acetyl phosphate from acetate and ATP. Can also catalyze the reverse reaction. The sequence is that of Acetate kinase from Clostridium botulinum (strain Kyoto / Type A2).